The chain runs to 119 residues: NLYQFKNMIKCTVPSRSWWHFANYGCYCGRGGSGTPVDDLDRCCQTHDNCYSDAEKISGCRPYFKTYSYDCTKGKLTCKEGNNECAAFVCKCDRLAAICFAGAHYNDNNNYIDLARHCQ.

7 disulfide bridges follow: Cys11–Cys71, Cys26–Cys118, Cys28–Cys44, Cys43–Cys99, Cys50–Cys92, Cys60–Cys85, and Cys78–Cys90. Residues Tyr27, Gly29, Gly31, and Asp48 each coordinate Ca(2+). Asp93 is a catalytic residue.

Belongs to the phospholipase A2 family. Group I subfamily. D49 sub-subfamily. Requires Ca(2+) as cofactor. In terms of tissue distribution, expressed by the venom gland.

The protein localises to the secreted. It carries out the reaction a 1,2-diacyl-sn-glycero-3-phosphocholine + H2O = a 1-acyl-sn-glycero-3-phosphocholine + a fatty acid + H(+). In terms of biological role, PLA2 catalyzes the calcium-dependent hydrolysis of the 2-acyl groups in 3-sn-phosphoglycerides. The polypeptide is Basic phospholipase A2 DE-1 (Hemachatus haemachatus (Rinkhals)).